Consider the following 732-residue polypeptide: Ubiquitin carboxyl-terminal hydrolase 21 (732 aa).

Over residues 1-10 (MAEFSDPPPS) the composition is skewed to pro residues. A disordered region spans residues 1–111 (MAEFSDPPPS…ISPVSNNNHL (111 aa)). Polar residues-rich tracts occupy residues 11–31 (NLSS…SSPT) and 38–53 (VTNS…QIQA). Positions 55–69 (SPAKPDGSSSSPPDK) are enriched in low complexity. The USP domain maps to 163–469 (AGLYNSGNTC…PAYILFYARE (307 aa)). Cys-172 acts as the Nucleophile in catalysis. His-428 serves as the catalytic Proton acceptor. The disordered stretch occupies residues 534–732 (KEEVFHSAES…SSNMRRSIKL (199 aa)). Residues 540–551 (SAESSNNEDSSA) show a composition bias toward low complexity. Residues 583-609 (AYIDKSEKPFAETSQPKEPKPFADRAS) are compositionally biased toward basic and acidic residues. Positions 719 to 732 (KKKKSSNMRRSIKL) are enriched in basic residues.

It belongs to the peptidase C19 family.

It catalyses the reaction Thiol-dependent hydrolysis of ester, thioester, amide, peptide and isopeptide bonds formed by the C-terminal Gly of ubiquitin (a 76-residue protein attached to proteins as an intracellular targeting signal).. Its function is as follows. Recognizes and hydrolyzes the peptide bond at the C-terminal Gly of ubiquitin. Involved in the processing of poly-ubiquitin precursors as well as that of ubiquitinated proteins. The sequence is that of Ubiquitin carboxyl-terminal hydrolase 21 (UBP21) from Arabidopsis thaliana (Mouse-ear cress).